The following is a 277-amino-acid chain: Large ribosomal subunit protein uL2 (277 aa).

The tract at residues 222 to 277 (GVAMNPVDHPHGGGEGRTSGGRHPVTPWGKPTKGKKTRSNKATDKFIMRSRHQRKK) is disordered.

The protein belongs to the universal ribosomal protein uL2 family. As to quaternary structure, part of the 50S ribosomal subunit. Forms a bridge to the 30S subunit in the 70S ribosome.

One of the primary rRNA binding proteins. Required for association of the 30S and 50S subunits to form the 70S ribosome, for tRNA binding and peptide bond formation. It has been suggested to have peptidyltransferase activity; this is somewhat controversial. Makes several contacts with the 16S rRNA in the 70S ribosome. The sequence is that of Large ribosomal subunit protein uL2 from Brucella canis (strain ATCC 23365 / NCTC 10854 / RM-666).